Consider the following 948-residue polypeptide: Isoleucine--tRNA ligase (948 aa).

A 'HIGH' region motif is present at residues P58–H68. L-isoleucyl-5'-AMP is bound at residue E566. The 'KMSKS' region signature appears at K607–S611. K610 lines the ATP pocket. 4 residues coordinate Zn(2+): C911, C914, C931, and C934.

The protein belongs to the class-I aminoacyl-tRNA synthetase family. IleS type 1 subfamily. In terms of assembly, monomer. The cofactor is Zn(2+).

It is found in the cytoplasm. The catalysed reaction is tRNA(Ile) + L-isoleucine + ATP = L-isoleucyl-tRNA(Ile) + AMP + diphosphate. Its function is as follows. Catalyzes the attachment of isoleucine to tRNA(Ile). As IleRS can inadvertently accommodate and process structurally similar amino acids such as valine, to avoid such errors it has two additional distinct tRNA(Ile)-dependent editing activities. One activity is designated as 'pretransfer' editing and involves the hydrolysis of activated Val-AMP. The other activity is designated 'posttransfer' editing and involves deacylation of mischarged Val-tRNA(Ile). The chain is Isoleucine--tRNA ligase from Vibrio vulnificus (strain YJ016).